Here is a 77-residue protein sequence, read N- to C-terminus: Conotoxin CaHr91 (77 aa).

An N-terminal signal peptide occupies residues 1–19 (MKLTCALIITVLFLSITAD). The propeptide occupies 20–43 (DSRGKQGYRALKSIAGMLNSKTVR). Disulfide bonds link cysteine 45–cysteine 60, cysteine 52–cysteine 65, and cysteine 59–cysteine 74.

It belongs to the conotoxin O1 superfamily. Expressed by the venom duct.

Its subcellular location is the secreted. This Conus capitaneus (Captain cone) protein is Conotoxin CaHr91.